Consider the following 583-residue polypeptide: Nuclear hormone receptor family member nhr-31 (583 aa).

Positions 43–77 (DLRTSGATSSSGPATSYIIRPSDKQPTVSSGGSQN) are disordered. A compositionally biased stretch (low complexity) spans 46–58 (TSGATSSSGPATS). The span at 66–77 (KQPTVSSGGSQN) shows a compositional bias: polar residues. The nuclear receptor DNA-binding region spans 79 to 154 (DSVCAVCGDG…AGMDPKAVRP (76 aa)). 2 consecutive NR C4-type zinc fingers follow at residues 82-102 (CAVCGDGIAKLHYGVLACYGC) and 118-142 (CRFSNNCIVDKFQRNSCRYCRFQRC). An NR LBD domain is found at 195 to 464 (ETRILLMQLM…DNLLAEMFGD (270 aa)).

The protein belongs to the nuclear hormone receptor family.

It localises to the nucleus. In terms of biological role, orphan nuclear receptor. This is Nuclear hormone receptor family member nhr-31 (nhr-31) from Caenorhabditis elegans.